Here is a 279-residue protein sequence, read N- to C-terminus: Movement protein (279 aa).

It belongs to the cucumovirus movement protein family.

The protein resides in the host cell junction. Its subcellular location is the host plasmodesma. In terms of biological role, transports viral genome to neighboring plant cells directly through plasmosdesmata, without any budding. The movement protein allows efficient cell to cell propagation, by bypassing the host cell wall barrier. Acts by forming a tubular structure at the host plasmodesmata, enlarging it enough to allow free passage of virion capsids. In Cucumis sativus (Cucumber), this protein is Movement protein.